Consider the following 340-residue polypeptide: Ketol-acid reductoisomerase (NADP(+)) (340 aa).

Positions M1–T183 constitute a KARI N-terminal Rossmann domain. Residues F26–Q29, R49, S52, S54, and D84–Q87 each bind NADP(+). H109 is a catalytic residue. Residue G135 participates in NADP(+) binding. Positions T184–I329 constitute a KARI C-terminal knotted domain. Residues D192, E196, E228, and E232 each coordinate Mg(2+). S253 contacts substrate.

This sequence belongs to the ketol-acid reductoisomerase family. Mg(2+) is required as a cofactor.

It carries out the reaction (2R)-2,3-dihydroxy-3-methylbutanoate + NADP(+) = (2S)-2-acetolactate + NADPH + H(+). It catalyses the reaction (2R,3R)-2,3-dihydroxy-3-methylpentanoate + NADP(+) = (S)-2-ethyl-2-hydroxy-3-oxobutanoate + NADPH + H(+). It functions in the pathway amino-acid biosynthesis; L-isoleucine biosynthesis; L-isoleucine from 2-oxobutanoate: step 2/4. The protein operates within amino-acid biosynthesis; L-valine biosynthesis; L-valine from pyruvate: step 2/4. In terms of biological role, involved in the biosynthesis of branched-chain amino acids (BCAA). Catalyzes an alkyl-migration followed by a ketol-acid reduction of (S)-2-acetolactate (S2AL) to yield (R)-2,3-dihydroxy-isovalerate. In the isomerase reaction, S2AL is rearranged via a Mg-dependent methyl migration to produce 3-hydroxy-3-methyl-2-ketobutyrate (HMKB). In the reductase reaction, this 2-ketoacid undergoes a metal-dependent reduction by NADPH to yield (R)-2,3-dihydroxy-isovalerate. The polypeptide is Ketol-acid reductoisomerase (NADP(+)) (Campylobacter jejuni (strain RM1221)).